The sequence spans 217 residues: Cytidylate kinase (217 aa).

21-29 (GPAASGKGT) contacts ATP.

It belongs to the cytidylate kinase family. Type 1 subfamily.

The protein localises to the cytoplasm. It carries out the reaction CMP + ATP = CDP + ADP. It catalyses the reaction dCMP + ATP = dCDP + ADP. This is Cytidylate kinase from Rickettsia bellii (strain OSU 85-389).